Here is an 89-residue protein sequence, read N- to C-terminus: MTLANIKSAKKRAVQSEKRRQHNASQRSMMRTYIKKVYAQVAAGEKSAAESAFVEMQKVVDRMASKGLIHANKAANHKSKLAAQIKKLA.

The tract at residues 1–29 (MTLANIKSAKKRAVQSEKRRQHNASQRSM) is disordered.

This sequence belongs to the bacterial ribosomal protein bS20 family.

Its function is as follows. Binds directly to 16S ribosomal RNA. This is Small ribosomal subunit protein bS20 from Haemophilus influenzae (strain 86-028NP).